Reading from the N-terminus, the 478-residue chain is Glutamate-1-semialdehyde 2,1-aminomutase, chloroplastic (478 aa).

Residues 1–40 constitute a chloroplast transit peptide; the sequence is MAGAAAASAAAAAVASGISARPVAPRPSPSRARAPRSVVR. Residues 15 to 36 are disordered; sequence ASGISARPVAPRPSPSRARAPR. Lysine 318 is modified (N6-(pyridoxal phosphate)lysine).

Belongs to the class-III pyridoxal-phosphate-dependent aminotransferase family. HemL subfamily. Homodimer. Pyridoxal 5'-phosphate serves as cofactor.

Its subcellular location is the plastid. It is found in the chloroplast. It carries out the reaction (S)-4-amino-5-oxopentanoate = 5-aminolevulinate. It participates in porphyrin-containing compound metabolism; protoporphyrin-IX biosynthesis; 5-aminolevulinate from L-glutamyl-tRNA(Glu): step 2/2. It functions in the pathway porphyrin-containing compound metabolism; chlorophyll biosynthesis. The chain is Glutamate-1-semialdehyde 2,1-aminomutase, chloroplastic (GSA) from Oryza sativa subsp. japonica (Rice).